A 252-amino-acid polypeptide reads, in one-letter code: Chitooligosaccharide deacetylase (252 aa).

2 residues coordinate Mg(2+): H61 and H125.

This sequence belongs to the YdjC deacetylase family. ChbG subfamily. In terms of assembly, homodimer. Mg(2+) serves as cofactor.

The protein resides in the cytoplasm. The catalysed reaction is N,N'-diacetylchitobiose + H2O = N-acetyl-beta-D-glucosaminyl-(1-&gt;4)-D-glucosamine + acetate. It catalyses the reaction diacetylchitobiose-6'-phosphate + H2O = N'-monoacetylchitobiose-6'-phosphate + acetate. Its pathway is glycan degradation; chitin degradation. Its function is as follows. Involved in the degradation of chitin. ChbG is essential for growth on the acetylated chitooligosaccharides chitobiose and chitotriose but is dispensable for growth on cellobiose and chitosan dimer, the deacetylated form of chitobiose. Deacetylation of chitobiose-6-P and chitotriose-6-P is necessary for both the activation of the chb promoter by the regulatory protein ChbR and the hydrolysis of phosphorylated beta-glucosides by the phospho-beta-glucosidase ChbF. Catalyzes the removal of only one acetyl group from chitobiose-6-P to yield monoacetylchitobiose-6-P, the inducer of ChbR and the substrate of ChbF. The protein is Chitooligosaccharide deacetylase of Salmonella heidelberg (strain SL476).